Reading from the N-terminus, the 208-residue chain is LysM and putative peptidoglycan-binding domain-containing protein 2 (208 aa).

Residues 1-54 (MAEFSPVLPPLRDDGGGGRYGQPLFPRSRSGSESDSELSQSLARTKTRSYGSTA) form a disordered region. Low complexity predominate over residues 27-42 (RSRSGSESDSELSQSL). One can recognise a LysM domain in the interval 65 to 109 (IEHRVTDGETLQGIALKYGVTMEQIKRVNKLFSNDCIFLRNTLSI). Disordered regions lie at residues 122-169 (LSLE…EELS) and 187-208 (AARK…YQEI). Residues 129 to 140 (SEGNTPQESPCV) show a composition bias toward polar residues. Over residues 147–156 (PSPPPEPSVP) the composition is skewed to pro residues.

The polypeptide is LysM and putative peptidoglycan-binding domain-containing protein 2 (lysmd2) (Danio rerio (Zebrafish)).